The sequence spans 167 residues: MDQCLLEGYVAGIIDAEASLSVSIKIQEDLRCRVRVDPVFSITQDSKDVLNVVKNYFGCGRLMPKPGQEHLTLYVVDRLEALADCLIPKLDRLPLIVKKRGFEMFREIVLTLTRMKYRRVECCVIRDLVLKSYSLSSLNKKSKRKRSLEEILKIIPCDKAVEPPGER.

It belongs to the LAGLIDADG endonuclease family.

Its function is as follows. Endonuclease involved in rRNA intron I-gamma homing. The sequence is that of Homing endonuclease I-ApeII (apeII) from Aeropyrum pernix (strain ATCC 700893 / DSM 11879 / JCM 9820 / NBRC 100138 / K1).